We begin with the raw amino-acid sequence, 455 residues long: MSEQEIWEKVLTLAQEKVSSASYQTFLKDTKLFKLQNEQAIVVTDDDFVANWLKMNYAEIIKAALYEAIGHEIAPVFYTEEELKSLHTSEQKEENQPEQPAKKYTPGVDEAVIGGEQFNTHNTFETFVIGPGNRFPHAASLAVAEAPAKAYNPLFIYGGVGLGKTHLMHAIGHYVLDNNPDAKVIYTSSEKFTNEFIKSIRDNKTERFREKYRNIDVLLIDDIQFIQNKEQTQEEFFHTFNELHQANKQIVISSDRPPKEIAKLEDRLRSRFEWGLIVDITPPDYETRMAILQKKIGEENLNIPTEALTYIANQIQSNIRELEGALTRVLAFSKLQGQPITTELTAEALKDIIQAPKSKKITIQDIQKIVGQYYSVRIEDFSAKKRTKSIAYPRQIAMYLSRELTDFSLPKIGEEFGGRDHTTVIHAHEKIVKDIQNDPTFKQEVENLEKEIRNQ.

Residues 1–74 (MSEQEIWEKV…LYEAIGHEIA (74 aa)) form a domain I, interacts with DnaA modulators region. A domain II region spans residues 74-116 (APVFYTEEELKSLHTSEQKEENQPEQPAKKYTPGVDEAVIGGE). The span at 85 to 95 (SLHTSEQKEEN) shows a compositional bias: basic and acidic residues. The interval 85–104 (SLHTSEQKEENQPEQPAKKY) is disordered. A domain III, AAA+ region region spans residues 117–333 (QFNTHNTFET…GALTRVLAFS (217 aa)). Positions 161, 163, 164, and 165 each coordinate ATP. The tract at residues 334–455 (KLQGQPITTE…ENLEKEIRNQ (122 aa)) is domain IV, binds dsDNA.

This sequence belongs to the DnaA family. As to quaternary structure, oligomerizes as a right-handed, spiral filament on DNA at oriC.

The protein resides in the cytoplasm. In terms of biological role, plays an essential role in the initiation and regulation of chromosomal replication. ATP-DnaA binds to the origin of replication (oriC) to initiate formation of the DNA replication initiation complex once per cell cycle. Binds the DnaA box (a 9 base pair repeat at the origin) and separates the double-stranded (ds)DNA. Forms a right-handed helical filament on oriC DNA; dsDNA binds to the exterior of the filament while single-stranded (ss)DNA is stabiized in the filament's interior. The ATP-DnaA-oriC complex binds and stabilizes one strand of the AT-rich DNA unwinding element (DUE), permitting loading of DNA polymerase. After initiation quickly degrades to an ADP-DnaA complex that is not apt for DNA replication. Binds acidic phospholipids. The chain is Chromosomal replication initiator protein DnaA from Staphylococcus saprophyticus subsp. saprophyticus (strain ATCC 15305 / DSM 20229 / NCIMB 8711 / NCTC 7292 / S-41).